The following is a 256-amino-acid chain: H-2 class II histocompatibility antigen, A-B alpha chain (256 aa).

Positions 1–23 (MPRSRALILGVLALTTMLSLCGG) are cleaved as a signal peptide. The segment at 24-111 (EDDIEADHVG…KRSNSTPATN (88 aa)) is alpha-1. Over 24-218 (EDDIEADHVG…IPAPMSELTE (195 aa)) the chain is Extracellular. The segment at 112–205 (EAPQATVFPK…GLEEPVLKHW (94 aa)) is alpha-2. Residues 114-206 (PQATVFPKSP…LEEPVLKHWE (93 aa)) form the Ig-like C1-type domain. C134 and C190 are joined by a disulfide. N-linked (GlcNAc...) asparagine glycosylation occurs at N145. A connecting peptide region spans residues 206-218 (EPEIPAPMSELTE). A helical transmembrane segment spans residues 219–244 (TVVCALGLSVGLVGIVVGTIFIIQGL). The Cytoplasmic portion of the chain corresponds to 245 to 256 (RSGGTSRHPGPL).

It belongs to the MHC class II family.

It is found in the membrane. This Mus musculus (Mouse) protein is H-2 class II histocompatibility antigen, A-B alpha chain (H2-Aa).